The following is a 962-amino-acid chain: Phenylalanine--tRNA ligase beta subunit (962 aa).

In terms of domain architecture, tRNA-binding spans 85 to 201 (TIRWCKVRVC…AEVFQGDELS (117 aa)). A B5 domain is found at 456–538 (TQQSPILLST…RVIGFNRIPS (83 aa)). Mg(2+) is bound by residues aspartate 516, aspartate 522, glutamate 525, and glutamate 526. The segment at 621 to 675 (PDSTHNPDSGSDPIIPTGVTRITEPGSSGVSGPGNVGVKEKCSADTSIEHAPTTR) is insert. Residues 870–961 (PTSPAATQHL…ASSKFGAIMR (92 aa)) form the FDX-ACB domain.

The protein belongs to the phenylalanyl-tRNA synthetase beta subunit family. Type 1 subfamily. In terms of assembly, tetramer of two alpha and two beta subunits. Mg(2+) is required as a cofactor.

It is found in the cytoplasm. The catalysed reaction is tRNA(Phe) + L-phenylalanine + ATP = L-phenylalanyl-tRNA(Phe) + AMP + diphosphate + H(+). The polypeptide is Phenylalanine--tRNA ligase beta subunit (Tropheryma whipplei (strain Twist) (Whipple's bacillus)).